Reading from the N-terminus, the 197-residue chain is Inner membrane-spanning protein YciB (197 aa).

Transmembrane regions (helical) follow at residues 22-42, 48-68, 76-96, 121-141, and 144-164; these read IYSA…YHWF, PSMM…TLIF, WKPS…HLIG, AAWV…AYTF, and EIWV…FLIG.

This sequence belongs to the YciB family.

The protein localises to the cell inner membrane. Functionally, plays a role in cell envelope biogenesis, maintenance of cell envelope integrity and membrane homeostasis. The chain is Inner membrane-spanning protein YciB from Magnetococcus marinus (strain ATCC BAA-1437 / JCM 17883 / MC-1).